A 119-amino-acid chain; its full sequence is Cysteine-rich DPF motif domain-containing protein 1 (119 aa).

This sequence belongs to the CDPF1 family.

This chain is Cysteine-rich DPF motif domain-containing protein 1 (Cdpf1), found in Mus musculus (Mouse).